Consider the following 357-residue polypeptide: Protein BIG GRAIN 1-like A (357 aa).

2 disordered regions span residues 1-146 (MEIT…KELG) and 208-233 (SSTCSSASSFSRSCLSKTPSSSGKSK). Over residues 75–87 (DFERSRRKTDFLR) the composition is skewed to basic and acidic residues. 2 stretches are compositionally biased toward low complexity: residues 88-104 (HSNSSSSDSSGFSSSES) and 112-127 (KSSASPPSSSRQQPKP). Residues 129 to 139 (RTSSVDHSSAV) are compositionally biased toward polar residues. Residues 208–223 (SSTCSSASSFSRSCLS) are compositionally biased toward low complexity.

The protein belongs to the BIG GRAIN 1 (BG1) plant protein family.

Its subcellular location is the cell membrane. Its function is as follows. Involved in auxin transport. Regulator of the auxin signaling pathway. The protein is Protein BIG GRAIN 1-like A of Arabidopsis thaliana (Mouse-ear cress).